Here is a 186-residue protein sequence, read N- to C-terminus: Nuclear transcription factor Y subunit B-1 (186 aa).

A disordered region spans residues 1–24 (MAGNKKRGGRNMDQVKKAAVRSDG). The DNA-binding element occupies 34 to 40 (LPMANLV). Residues 61 to 72 (THDCAVEFVGFV) form a subunit association domain (SAD) region. The tract at residues 123-142 (GGNRRVAPPPPAAATPLTPG) is disordered.

It belongs to the NFYB/HAP3 subunit family. In terms of assembly, heterotrimeric transcription factor composed of three components, NF-YA, NF-YB and NF-YC. NF-YB and NF-YC must interact and dimerize for NF-YA association and DNA binding. Interacts with MADS18. Forms a ternary complex with the MADS6-MADS18 heterodimer. In terms of tissue distribution, expressed in developing kernels.

The protein localises to the nucleus. Its function is as follows. Component of the NF-Y/HAP transcription factor complex. The NF-Y complex stimulates the transcription of various genes by recognizing and binding to a CCAAT motif in promoters. May act through association with MADS-box proteins. May regulate the expression of genes involved in flowering. The protein is Nuclear transcription factor Y subunit B-1 (NFYB1) of Oryza sativa subsp. japonica (Rice).